Consider the following 365-residue polypeptide: Coxsackievirus and adenovirus receptor homolog (365 aa).

The N-terminal stretch at 1 to 19 (MELLLRFLLLCGVADFTRG) is a signal peptide. 2 Ig-like C2-type domains span residues 20 to 136 (LSIT…IQLT) and 141 to 228 (PSGI…LRLD). Topologically, residues 20-238 (LSITTPEQMI…VVPPSNRAGT (219 aa)) are extracellular. Intrachain disulfides connect Cys-41-Cys-120, Cys-146-Cys-223, and Cys-162-Cys-212. An N-linked (GlcNAc...) asparagine glycan is attached at Asn-106. A helical membrane pass occupies residues 239-259 (IAGAVIGTLLALVLIALIVFC). Residues Cys-259 and Cys-260 are each lipidated (S-palmitoyl cysteine). The Cytoplasmic segment spans residues 260–365 (CHKKRREEKY…PAQSKDGSIV (106 aa)). Over residues 269 to 282 (YEKEVHHDIREDVP) the composition is skewed to basic and acidic residues. Residues 269–343 (YEKEVHHDIR…TLPPAKVAAP (75 aa)) form a disordered region. The span at 286-322 (SRTSTARSYIGSNHSSLGSMSPSNMEGYSKTQYNQVP) shows a compositional bias: polar residues. Residues Ser-297, Ser-304, Ser-306, Ser-323, Ser-332, and Ser-363 each carry the phosphoserine modification. The PDZ-binding motif lies at 360–365 (KDGSIV).

Monomer. May form homodimers. Interacts with LNX, MAGI1, DLG4, PRKCABP, TJP1 and CTNNB1. Interacts with MPDZ; recruits MPDZ to intercellular contact sites. Interacts with JAML (homodimeric form). N-glycosylated. Post-translationally, palmitoylated on Cys-259 and/or Cys-260; required for proper localization to the plasma membrane.

The protein resides in the cell membrane. The protein localises to the basolateral cell membrane. Its subcellular location is the cell junction. It localises to the tight junction. It is found in the adherens junction. Component of the epithelial apical junction complex that may function as a homophilic cell adhesion molecule and is essential for tight junction integrity. Also involved in transepithelial migration of leukocytes through adhesive interactions with JAML a transmembrane protein of the plasma membrane of leukocytes. The interaction between both receptors also mediates the activation of gamma-delta T-cells, a subpopulation of T-cells residing in epithelia and involved in tissue homeostasis and repair. Upon epithelial CXADR-binding, JAML induces downstream cell signaling events in gamma-delta T-cells through PI3-kinase and MAP kinases. It results in proliferation and production of cytokines and growth factors by T-cells that in turn stimulate epithelial tissues repair. This chain is Coxsackievirus and adenovirus receptor homolog (CXADR), found in Bos taurus (Bovine).